The sequence spans 436 residues: Sulfopropanediol 3-dehydrogenase (436 aa).

3 residues coordinate NAD(+): Tyr-118, Gln-180, and Asn-203. Zn(2+) contacts are provided by Gln-248 and His-251. Residues Glu-318 and His-319 each act as proton acceptor in the active site. Residues Asp-352 and His-411 each coordinate Zn(2+).

The protein belongs to the histidinol dehydrogenase family. HpsN subfamily. Zn(2+) is required as a cofactor.

The enzyme catalyses (2R)-3-sulfopropanediol + 2 NAD(+) + H2O = (2R)-3-sulfolactate + 2 NADH + 3 H(+). Its function is as follows. Catalyzes the NAD-dependent oxidation of (R)-2,3-dihydroxypropane-1-sulfonate to (R)-3-sulfolactate. In Cupriavidus pinatubonensis (strain JMP 134 / LMG 1197) (Cupriavidus necator (strain JMP 134)), this protein is Sulfopropanediol 3-dehydrogenase.